The following is a 303-amino-acid chain: Taste receptor type 2 member 2 (303 aa).

Residues 1-10 (MALSFSAILH) are Extracellular-facing. The helical transmembrane segment at 11–31 (IIMMSAEFFTGITVNGFLIIV) threads the bilayer. Residues 32–56 (NCNELIKHRKLMPIQILLMCIGMSR) lie on the Cytoplasmic side of the membrane. A helical transmembrane segment spans residues 57-77 (FGLQMVLMVQSFFSVFFPLLY). At 78–79 (VK) the chain is on the extracellular side. A helical membrane pass occupies residues 80–100 (IIYGAAMMFLWMFFSSISLWF). Over 101 to 102 (AT) the chain is Cytoplasmic. Residues 103 to 123 (CLSVFYCLKISGFTQSCFLWL) traverse the membrane as a helical segment. At 124–129 (KFRIPK) the chain is on the extracellular side. Residues 130-150 (LIPWLLLGSVLASVSIASVCI) traverse the membrane as a helical segment. At 151–185 (EVDYAKNVEEDALRNTTLKKSKTKIKKISEVLLVN) the chain is on the cytoplasmic side. Residues 186 to 206 (LALIFPLAIFVMCTSMLLISL) traverse the membrane as a helical segment. Residues 207-234 (YKHTHRMQHGSHGFRNANTEAHINALKT) lie on the Extracellular side of the membrane. A helical membrane pass occupies residues 235–255 (VITFFCFFISYFAAFMTNMTF). Over 256-277 (SLPYRSHQFFMLKDIMAAYPSG) the chain is Cytoplasmic.

The protein belongs to the G-protein coupled receptor T2R family.

It is found in the cell membrane. In terms of biological role, bitter taste receptor that detects natural and synthetic bitter compounds. The chain is Taste receptor type 2 member 2 from Homo sapiens (Human).